Consider the following 364-residue polypeptide: Fructose-bisphosphate aldolase B (364 aa).

Residue A2 is modified to N-acetylalanine. K13 is subject to N6-succinyllysine. Phosphoserine is present on S36. At T39 the chain carries Phosphothreonine. Residue R43 coordinates beta-D-fructose 1,6-bisphosphate. A Phosphoserine modification is found at S89. T119 is subject to Phosphothreonine. N6-succinyllysine is present on K121. S132 carries the post-translational modification Phosphoserine. Catalysis depends on E188, which acts as the Proton acceptor. S206 bears the Phosphoserine mark. Catalysis depends on K230, which acts as the Schiff-base intermediate with dihydroxyacetone-P. Residues S272, S276, S299, and S301 each carry the phosphoserine modification. Residue 272 to 274 coordinates beta-D-fructose 1,6-bisphosphate; the sequence is SGG. R304 is a binding site for beta-D-fructose 1,6-bisphosphate. S309 is modified (phosphoserine). K317 is modified (N6-succinyllysine).

This sequence belongs to the class I fructose-bisphosphate aldolase family. In terms of assembly, homotetramer. Interacts with BBS1, BBS2, BBS4 and BBS7. Forms a ternary complex with G6PD and TP53; this interaction is direct.

It localises to the cytoplasm. The protein localises to the cytosol. It is found in the cytoskeleton. The protein resides in the microtubule organizing center. Its subcellular location is the centrosome. It localises to the centriolar satellite. It catalyses the reaction beta-D-fructose 1,6-bisphosphate = D-glyceraldehyde 3-phosphate + dihydroxyacetone phosphate. The enzyme catalyses beta-D-fructose 1-phosphate = D-glyceraldehyde + dihydroxyacetone phosphate. Its pathway is carbohydrate degradation; glycolysis; D-glyceraldehyde 3-phosphate and glycerone phosphate from D-glucose: step 4/4. It functions in the pathway carbohydrate biosynthesis; gluconeogenesis. The protein operates within carbohydrate metabolism; fructose metabolism. In terms of biological role, catalyzes the aldol cleavage of fructose 1,6-biphosphate to form two triosephosphates dihydroxyacetone phosphate and D-glyceraldehyde 3-phosphate in glycolysis as well as the reverse stereospecific aldol addition reaction in gluconeogenesis. In fructolysis, metabolizes fructose 1-phosphate derived from the phosphorylation of dietary fructose by fructokinase into dihydroxyacetone phosphate and D-glyceraldehyde. Acts as an adapter independently of its enzymatic activity, exerts a tumor suppressor role by stabilizing the ternary complex with G6PD and TP53 to inhibit G6PD activity and keep oxidative pentose phosphate metabolism in check. The polypeptide is Fructose-bisphosphate aldolase B (Mus musculus (Mouse)).